A 365-amino-acid polypeptide reads, in one-letter code: MKPQEEEEKNENMARKRSKSSSSLSIPLDIATDIFLRLPAKSVVRFSCVAKHWSSITTAPYFTNSFETRPNLLFFFKEADRFFVVTVPKPNRRPNESVSHTSSQILDSYQTPYPKHSCFTIKTESVHGLICFQRGTKPIVWNPTMRKFKPLRKPDKSWESLTVFLGYDPLERTHKVVAMPCDKASDECRILTLGSADQESWRTVKTNYKHHPSRGNRKNNYGPCRCINGVLYYLAEIDRHRLIGKFAFLGHSNVKNSLPMWVLEGEKKGEWSTYNFLPLSHYDRRLEFHFKLIGITNDGELIYVPNTVFKTFEVIYIDPIRKTFSLVKYEGVADKGFRQRNGLGEDKPLRGIQYSPNHVETLLSL.

A disordered region spans residues 1–20 (MKPQEEEEKNENMARKRSKS). One can recognise an F-box domain in the interval 20–69 (SSSSLSIPLDIATDIFLRLPAKSVVRFSCVAKHWSSITTAPYFTNSFETR).

This is F-box protein At1g48060 from Arabidopsis thaliana (Mouse-ear cress).